The chain runs to 302 residues: MTTTMEYHNPVLLHPTVDGLDIKPDGIYVDVTFGGGGHSKEILRRLGPNGKLFAFDQDEDALANALPDERFTLINENFRFIKRFLRFHGIKAVDGILADLGVSSHQFDVPERGFSTRFDAELDMRMSQKNDLNAYRVVNEYEEQDLRRVFFDYGELKNAPVLARTIVEARHHRPIKTTDELKEVLKKYLPEKVRNKILAQIYQAIRIEVNQEMDVLKEFIEQSLEILKPGGRFSVISYHSLEDRLVKRFIKNGMFEGEPERDFYGNFSVPFKTIGKLIVPDDEEIKINNRARSAKLRIAEKI.

Residues 36–38 (GGH), D56, F84, D99, and Q106 contribute to the S-adenosyl-L-methionine site.

This sequence belongs to the methyltransferase superfamily. RsmH family.

Its subcellular location is the cytoplasm. It carries out the reaction cytidine(1402) in 16S rRNA + S-adenosyl-L-methionine = N(4)-methylcytidine(1402) in 16S rRNA + S-adenosyl-L-homocysteine + H(+). Its function is as follows. Specifically methylates the N4 position of cytidine in position 1402 (C1402) of 16S rRNA. This is Ribosomal RNA small subunit methyltransferase H from Flavobacterium johnsoniae (strain ATCC 17061 / DSM 2064 / JCM 8514 / BCRC 14874 / CCUG 350202 / NBRC 14942 / NCIMB 11054 / UW101) (Cytophaga johnsonae).